Consider the following 372-residue polypeptide: Cytochrome b (372 aa).

Helical transmembrane passes span 25–45 (FGSM…FLAI), 69–90 (WCLQ…YIHI), 105–125 (WMSG…GYVL), and 170–190 (FFAL…IHII). Residues His75 and His89 each contribute to the heme b site. Heme b contacts are provided by His174 and His188. His193 serves as a coordination point for a ubiquinone. 4 helical membrane-spanning segments follow: residues 218 to 238 (YKDL…MSFS), 280 to 300 (LGGT…PFTH), 312 to 332 (MAQF…WAAS), and 339 to 358 (YITI…IINP).

Belongs to the cytochrome b family. In terms of assembly, the cytochrome bc1 complex contains 3 respiratory subunits (MT-CYB, CYC1 and UQCRFS1), 2 core proteins (UQCRC1 and UQCRC2) and probably 6 low-molecular weight proteins. Heme b is required as a cofactor.

It is found in the mitochondrion inner membrane. In terms of biological role, component of the ubiquinol-cytochrome c reductase complex (complex III or cytochrome b-c1 complex) that is part of the mitochondrial respiratory chain. The b-c1 complex mediates electron transfer from ubiquinol to cytochrome c. Contributes to the generation of a proton gradient across the mitochondrial membrane that is then used for ATP synthesis. In Acrochordus granulatus (Rasp-skinned water snake), this protein is Cytochrome b (MT-CYB).